The following is a 222-amino-acid chain: Vespryn (222 aa).

A signal peptide spans 1-44; sequence MSPSAGLQFSLYFLQTKKVLWKLTDKEKGLCYILLFTLCFFADQ. Positions 45 to 52 are excised as a propeptide; it reads ENGGKALA. The B30.2/SPRY domain maps to 53–159; that stretch reads SPPGIWKRAD…RIWQMGLWWL (107 aa). Positions 160–222 are excised as a propeptide; the sequence is RHLETDPGRV…LGGTVSLTTL (63 aa). Asn195 carries N-linked (GlcNAc...) asparagine glycosylation.

The protein belongs to the ohanin/vespryn family. Expressed by the venom gland.

It localises to the secreted. Functionally, neurotoxin that produces dose-dependent hypolocomotion and hyperalgesia in mice. May directly act on the central nervous system, as it is 6500-fold more potent when administered intracerebroventricularly than intraperitoneal. In Crotalus adamanteus (Eastern diamondback rattlesnake), this protein is Vespryn.